The chain runs to 137 residues: Flavodoxin (137 aa).

The 136-residue stretch at 2–137 folds into the Flavodoxin-like domain; sequence VEIVYWSGTG…KELGEAAAKA (136 aa).

Belongs to the flavodoxin family. FMN is required as a cofactor.

Its function is as follows. Low-potential electron donor to a number of redox enzymes. This Megasphaera elsdenii protein is Flavodoxin.